The chain runs to 563 residues: Ras and Rab interactor-like protein (563 aa).

Residues 181–208 (GWGTETPQQTEPETGQKYSLAPRKPTPH) are disordered. Over residues 184–196 (TETPQQTEPETGQ) the composition is skewed to low complexity. One can recognise a VPS9 domain in the interval 381–518 (AQELRRLRRR…IAHYQPDTGR (138 aa)). The interval 539–563 (TLHQQAQPTAQANQPFEEPWAIGDP) is disordered. Low complexity predominate over residues 542-553 (QQAQPTAQANQP).

Interacts with RAB5A, RAB22A and MUSK. In terms of tissue distribution, detected in thymus and spleen (at protein level). Detected in lung, liver, kidney, spleen, thymus and skeletal muscle.

Its subcellular location is the cell projection. The protein resides in the ruffle. It is found in the cytoplasmic vesicle. Functionally, guanine nucleotide exchange factor (GEF) for RAB5A and RAB22A that activates RAB5A and RAB22A by exchanging bound GDP for free GTP. Plays a role in endocytosis via its role in activating Rab family members. The polypeptide is Ras and Rab interactor-like protein (Rinl) (Mus musculus (Mouse)).